The following is a 78-amino-acid chain: Antitoxin VapB2 (78 aa).

The region spanning 4-44 (AKIFMNGQSQAVRLPKEFRFSVKEVSVIPLGKGIVLQPLPN) is the SpoVT-AbrB domain.

This sequence belongs to the VapB family. Forms complexes with VapC2; probably VapC2(4):VapB2(2) in the absence of DNA, and VapC2(4):VapB2(4) in the presence of DNA. Crystallizes as heterodimers with stoichiometry VapC2(4):VapB2(4) in the presence of its probable promoter DNA. The heterodimers are in contact via alternative VapC-VapC and VapB-VapB interactions. This subunit contacts DNA.

Functionally, antitoxin component of a type II toxin-antitoxin (TA) system. Upon expression in E.coli or S.cerevisiae neutralizes the effect of cognate toxin VapC2, partially inhibits the RNase activity of VapC2. The chain is Antitoxin VapB2 (vapB2) from Rickettsia felis (strain ATCC VR-1525 / URRWXCal2) (Rickettsia azadi).